The chain runs to 428 residues: Glutamyl-tRNA reductase (428 aa).

Residues Thr-49–Arg-52, Ser-109, Glu-114–Gln-116, and Gln-120 contribute to the substrate site. Catalysis depends on Cys-50, which acts as the Nucleophile. Gly-189–Ser-194 contributes to the NADP(+) binding site.

It belongs to the glutamyl-tRNA reductase family. In terms of assembly, homodimer.

It catalyses the reaction (S)-4-amino-5-oxopentanoate + tRNA(Glu) + NADP(+) = L-glutamyl-tRNA(Glu) + NADPH + H(+). Its pathway is porphyrin-containing compound metabolism; protoporphyrin-IX biosynthesis; 5-aminolevulinate from L-glutamyl-tRNA(Glu): step 1/2. It participates in porphyrin-containing compound metabolism; chlorophyll biosynthesis. Catalyzes the NADPH-dependent reduction of glutamyl-tRNA(Glu) to glutamate 1-semialdehyde (GSA). The protein is Glutamyl-tRNA reductase of Gloeothece citriformis (strain PCC 7424) (Cyanothece sp. (strain PCC 7424)).